A 1657-amino-acid polypeptide reads, in one-letter code: Ras GTPase-activating-like protein IQGAP1 (1657 aa).

Ser-2 carries the post-translational modification N-acetylserine. Position 2 is a phosphoserine (Ser-2). Positions 44–159 (LCHLEEAKRW…YCIHALSLYL (116 aa)) constitute a Calponin-homology (CH) domain. Phosphotyrosine is present on Tyr-172. The residue at position 330 (Ser-330) is a Phosphoserine. A WW domain is found at 685 to 710 (WVKHWVKGGYHYYHNLETQAGGWAEP). IQ domains follow at residues 745–774 (NEGL…FLKK), 775–804 (QIPA…YLHS), 805–834 (HKDE…YFRD), and 835–864 (HIND…AEDP). Positions 956 to 1274 (GGLKALSKEK…FFQVACDVPE (319 aa)) are C1. In terms of domain architecture, Ras-GAP spans 1020–1269 (YLLLRLFQTA…QKFRRFFQVA (250 aa)). Positions 1276–1657 (QDKFNVDEYS…FLLNKKFYGK (382 aa)) are C2. Phosphoserine is present on Ser-1441.

Interacts with CDC42; the interaction is demonstrated with IQGAP1 in GTP-bound and in nucleotide-free state. Interacts with RAC1. Does not interact with RHOA. Interacts with TSG101. Interacts with PAK6. Interacts with SASH1. Interacts with PJVK. Interacts with SLC26A4. This interaction enhances the chloride-bicarbonate exchange activity of SLC26A4. Interacts with SVEP1. Interacts with ILK; the interaction is required for localization of IQGAP to the cell cortex. In terms of assembly, (Microbial infection) In case of infection, interacts with S.typhimurium protein sseI. As to expression, expressed in the kidney (at protein level).

The protein localises to the cell membrane. The protein resides in the nucleus. Its subcellular location is the cytoplasm. It is found in the cell cortex. It localises to the apical cell membrane. The protein localises to the basolateral cell membrane. Plays a crucial role in regulating the dynamics and assembly of the actin cytoskeleton. Recruited to the cell cortex by interaction with ILK which allows it to cooperate with its effector DIAPH1 to locally stabilize microtubules and allow stable insertion of caveolae into the plasma membrane. Binds to activated CDC42 but does not stimulate its GTPase activity. Associates with calmodulin. May promote neurite outgrowth. May play a possible role in cell cycle regulation by contributing to cell cycle progression after DNA replication arrest. The protein is Ras GTPase-activating-like protein IQGAP1 (Iqgap1) of Mus musculus (Mouse).